A 1989-amino-acid polypeptide reads, in one-letter code: Exophilin-5 (1989 aa).

Residues 7-63 (AFDFSFLNDEEARKILQVLERNEELQRAEKDRISKLQKTKRDIRWLQGVTGEWFEEI) form the RabBD domain. Disordered stretches follow at residues 93–117 (NDPIELPTSRSKNVTNQKKPTPFSS) and 348–391 (TQSK…FLRA). 2 stretches are compositionally biased toward polar residues: residues 100 to 111 (TSRSKNVTNQKK) and 359 to 376 (HQQSPKRTPLSSIIWNRS). Over residues 377–389 (DSSRDRENQEEFL) the composition is skewed to basic and acidic residues. Phosphoserine is present on Ser-603. 3 disordered regions span residues 631 to 651 (FSQISDDRRNPQSPNLQNPTV), 806 to 827 (STASLPFIQEHRTPPSFPRTDQ), and 882 to 933 (AALP…NQKN). The span at 641 to 651 (PQSPNLQNPTV) shows a compositional bias: polar residues. A phosphoserine mark is found at Ser-806 and Ser-809. A compositionally biased stretch (polar residues) spans 891–909 (KNSSLDAPVVPSTTVFSRR). A compositionally biased stretch (basic and acidic residues) spans 910–927 (SPSDKDPSLGEREEKDNA). 2 positions are modified to phosphoserine: Ser-1028 and Ser-1086. Disordered regions lie at residues 1094 to 1113 (EATERMTNVKSSGSTSVRKG), 1124 to 1152 (SCPSGEPHASTGREGRKKPLTSGMDASEL), and 1365 to 1493 (EIFS…TNCQ). Over residues 1098–1110 (RMTNVKSSGSTSV) the composition is skewed to polar residues. Phosphoserine is present on Ser-1124. The segment covering 1379-1390 (SENKKERGKKLQ) has biased composition (basic and acidic residues). The span at 1416–1431 (SINSSNSGPSSLPALS) shows a compositional bias: low complexity. Over residues 1434–1447 (NIGNSQTRRSSWEC) the composition is skewed to polar residues. Ser-1505 carries the phosphoserine modification. Disordered stretches follow at residues 1521–1590 (EETQ…NRSS) and 1644–1737 (PEPT…PITF). Basic and acidic residues-rich tracts occupy residues 1551–1560 (ESRKAEDEMQ), 1573–1589 (NKNKTNLDDLVKGENRS), and 1658–1670 (RLSENGKHVKKSE). Residues 1685 to 1709 (THVSNQKSNSISQRHQNEFKNVSES) are compositionally biased toward polar residues. A phosphoserine mark is found at Ser-1753, Ser-1768, Ser-1821, and Ser-1851. A disordered region spans residues 1921–1989 (FLKDDLRNPP…LDENDKESEL (69 aa)). The segment covering 1933–1943 (SESLSSNSPSS) has biased composition (low complexity). Over residues 1959 to 1989 (YEDDPVDSDCDTDTTTDDEYYLDENDKESEL) the composition is skewed to acidic residues.

Interacts with RAB27A. Expressed in keratinocytes.

May act as Rab effector protein and play a role in vesicle trafficking. This chain is Exophilin-5, found in Homo sapiens (Human).